The following is a 704-amino-acid chain: Elongation factor G (704 aa).

The tr-type G domain occupies 8–290 (ARYRNIGISA…AVIDYLPSPV (283 aa)). Residues 17 to 24 (AHIDAGKT), 88 to 92 (DTPGH), and 142 to 145 (NKMD) each bind GTP. 2 positions are modified to N6-acetyllysine: Lys504 and Lys643.

The protein belongs to the TRAFAC class translation factor GTPase superfamily. Classic translation factor GTPase family. EF-G/EF-2 subfamily.

It is found in the cytoplasm. Catalyzes the GTP-dependent ribosomal translocation step during translation elongation. During this step, the ribosome changes from the pre-translocational (PRE) to the post-translocational (POST) state as the newly formed A-site-bound peptidyl-tRNA and P-site-bound deacylated tRNA move to the P and E sites, respectively. Catalyzes the coordinated movement of the two tRNA molecules, the mRNA and conformational changes in the ribosome. In Shigella flexneri, this protein is Elongation factor G.